A 465-amino-acid chain; its full sequence is D-arabinitol 4-dehydrogenase (465 aa).

Belongs to the mannitol dehydrogenase family.

It catalyses the reaction D-arabinitol + NAD(+) = D-xylulose + NADH + H(+). Its pathway is carbohydrate metabolism; D-arabinitol metabolism. The chain is D-arabinitol 4-dehydrogenase (dalD) from Ralstonia nicotianae (strain ATCC BAA-1114 / GMI1000) (Ralstonia solanacearum).